A 327-amino-acid polypeptide reads, in one-letter code: Biotin synthase (327 aa).

The Radical SAM core domain occupies 51-278 (QTIQLSTLMS…KSYVRLSAGR (228 aa)). Positions 66, 70, and 73 each coordinate [4Fe-4S] cluster. C110, C141, C201, and R273 together coordinate [2Fe-2S] cluster.

Belongs to the radical SAM superfamily. Biotin synthase family. Homodimer. The cofactor is [4Fe-4S] cluster. It depends on [2Fe-2S] cluster as a cofactor.

The catalysed reaction is (4R,5S)-dethiobiotin + (sulfur carrier)-SH + 2 reduced [2Fe-2S]-[ferredoxin] + 2 S-adenosyl-L-methionine = (sulfur carrier)-H + biotin + 2 5'-deoxyadenosine + 2 L-methionine + 2 oxidized [2Fe-2S]-[ferredoxin]. It functions in the pathway cofactor biosynthesis; biotin biosynthesis; biotin from 7,8-diaminononanoate: step 2/2. Functionally, catalyzes the conversion of dethiobiotin (DTB) to biotin by the insertion of a sulfur atom into dethiobiotin via a radical-based mechanism. The sequence is that of Biotin synthase from Histophilus somni (strain 2336) (Haemophilus somnus).